A 129-amino-acid polypeptide reads, in one-letter code: Small ribosomal subunit protein uS11 (129 aa).

Belongs to the universal ribosomal protein uS11 family. Part of the 30S ribosomal subunit. Interacts with proteins S7 and S18. Binds to IF-3.

Its function is as follows. Located on the platform of the 30S subunit, it bridges several disparate RNA helices of the 16S rRNA. Forms part of the Shine-Dalgarno cleft in the 70S ribosome. This chain is Small ribosomal subunit protein uS11, found in Halalkalibacterium halodurans (strain ATCC BAA-125 / DSM 18197 / FERM 7344 / JCM 9153 / C-125) (Bacillus halodurans).